The following is a 488-amino-acid chain: Galactose-1-phosphate uridylyltransferase (488 aa).

Belongs to the galactose-1-phosphate uridylyltransferase type 2 family.

Its subcellular location is the cytoplasm. The enzyme catalyses alpha-D-galactose 1-phosphate + UDP-alpha-D-glucose = alpha-D-glucose 1-phosphate + UDP-alpha-D-galactose. It participates in carbohydrate metabolism; galactose metabolism. This chain is Galactose-1-phosphate uridylyltransferase (galT), found in Lactobacillus helveticus (Lactobacillus suntoryeus).